Reading from the N-terminus, the 663-residue chain is RING finger protein 145 (663 aa).

14 helical membrane-spanning segments follow: residues 53-73 (YLAL…LTLP), 77-97 (LVQL…HQIS), 123-143 (FTTA…VMKT), 146-166 (IWLF…VPLE), 168-188 (IVII…YFLG), 205-222 (LVQV…MSLW), 225-245 (LVVP…QIYS), 275-295 (YSLL…LTLC), 316-336 (TEGV…LQVV), 340-360 (FLLS…MLEI), 384-404 (SLCL…CQFF), 410-430 (LLII…TLFI), 460-480 (LLEF…TIFG), and 482-502 (WTVM…WLRA). Residues 81 to 84 (YLYF) carry the YLYF motif motif. The active site involves C537. An RING-type; atypical zinc finger spans residues 537–575 (CAICYQDMKSAVITPCSHFFHAGCLKKWLYVQDTCPLCH). The interval 587–663 (LGTEAAPQPP…EGEVCPVESA (77 aa)) is disordered. Polar residues predominate over residues 619–628 (GTGTQEGSGD).

As to quaternary structure, interacts (via YLYF motif) with INSIG1 and INSIG2.

It is found in the endoplasmic reticulum membrane. It catalyses the reaction S-ubiquitinyl-[E2 ubiquitin-conjugating enzyme]-L-cysteine + [acceptor protein]-L-lysine = [E2 ubiquitin-conjugating enzyme]-L-cysteine + N(6)-ubiquitinyl-[acceptor protein]-L-lysine.. In terms of biological role, E3 ubiquitin ligase that catalyzes the direct transfer of ubiquitin from E2 ubiquitin-conjugating enzyme to a specific substrate. In response to bacterial infection, negatively regulates the phagocyte oxidative burst by controlling the turnover of the NADPH oxidase complex subunits. Promotes monoubiquitination of CYBA and 'Lys-48'-linked polyubiquitination and degradation of CYBB NADPH oxidase catalytic subunits, both essential for the generation of antimicrobial reactive oxygen species. Involved in the maintenance of cholesterol homeostasis. In response to high sterol concentrations ubiquitinates HMGCR, a rate-limiting enzyme in cholesterol biosynthesis, and targets it for degradation. The interaction with INSIG1 is required for this function. In addition, triggers ubiquitination of SCAP, likely inhibiting its transport to the Golgi apparatus and the subsequent processing/maturation of SREBPF2, ultimately down-regulating cholesterol biosynthesis. The chain is RING finger protein 145 from Mus musculus (Mouse).